A 319-amino-acid polypeptide reads, in one-letter code: F-box only protein 8 (319 aa).

One can recognise an F-box domain in the interval Phe-68 to Leu-111. An SEC7 domain is found at Phe-146–Ser-276.

As to expression, high expression in brain, heart, kidney, liver, lung, skeletal muscle, testis, and day-7 embryos.

Functionally, may promote guanine-nucleotide exchange on an ARF. Promotes the activation of ARF through replacement of GDP with GTP (Potential). This is F-box only protein 8 (Fbxo8) from Mus musculus (Mouse).